The primary structure comprises 608 residues: Bifunctional lycopene cyclase/phytoene synthase (608 aa).

The segment at 1–240 (MSILTYLEFH…LVFATCAIDR (240 aa)) is lycopene beta-cyclase. 7 helical membrane passes run 3–23 (ILTYLEFHLYYTLPVLAALCW), 37–56 (YKFLMLMAASTASIWDNYIV), 80–97 (YMFFIIMTLMTVAFSNFV), 117–137 (LLVRLVPVSALLAITYHAWHL), 150–170 (ILWYACPVLAILWLGAGEYIL), 175–195 (AVLLSIVIPSVYLCWADIVAI), and 218–238 (VEECLFFTLINTVLVFATCAI). The segment at 247–608 (LYKSSVQNQN…ARKIKSFFVD (362 aa)) is phytoene synthase.

The protein in the N-terminal section; belongs to the lycopene beta-cyclase family. In the C-terminal section; belongs to the phytoene/squalene synthase family.

The protein resides in the membrane. The catalysed reaction is all-trans-lycopene = gamma-carotene. The enzyme catalyses gamma-carotene = all-trans-beta-carotene. It catalyses the reaction 2 (2E,6E,10E)-geranylgeranyl diphosphate = 15-cis-phytoene + 2 diphosphate. Its pathway is carotenoid biosynthesis; beta-carotene biosynthesis. The protein operates within carotenoid biosynthesis; phytoene biosynthesis; all-trans-phytoene from geranylgeranyl diphosphate: step 1/1. Its function is as follows. Bifunctional enzyme that catalyzes the reactions from geranylgeranyl diphosphate to phytoene (phytoene synthase) and lycopene to beta-carotene via the intermediate gamma-carotene (lycopene cyclase). In Blakeslea trispora (Choanephora trispora), this protein is Bifunctional lycopene cyclase/phytoene synthase.